We begin with the raw amino-acid sequence, 322 residues long: HPr kinase/phosphorylase (322 aa).

Active-site residues include His-146 and Lys-167. 161-168 (GDSGLGKS) provides a ligand contact to ATP. Mg(2+) is bound at residue Ser-168. Asp-185 (proton acceptor; for phosphorylation activity. Proton donor; for dephosphorylation activity) is an active-site residue. The tract at residues 209–218 (LEVRGLGLLD) is important for the catalytic mechanism of both phosphorylation and dephosphorylation. Glu-210 is a Mg(2+) binding site. Residue Arg-250 is part of the active site. Positions 271-276 (QVAAGR) are important for the catalytic mechanism of dephosphorylation.

It belongs to the HPrK/P family. Homohexamer. The cofactor is Mg(2+).

The catalysed reaction is [HPr protein]-L-serine + ATP = [HPr protein]-O-phospho-L-serine + ADP + H(+). It catalyses the reaction [HPr protein]-O-phospho-L-serine + phosphate + H(+) = [HPr protein]-L-serine + diphosphate. Functionally, catalyzes the ATP- as well as the pyrophosphate-dependent phosphorylation of a specific serine residue in HPr, a phosphocarrier protein of the phosphoenolpyruvate-dependent sugar phosphotransferase system (PTS). HprK/P also catalyzes the pyrophosphate-producing, inorganic phosphate-dependent dephosphorylation (phosphorolysis) of seryl-phosphorylated HPr (P-Ser-HPr). The sequence is that of HPr kinase/phosphorylase from Burkholderia multivorans (strain ATCC 17616 / 249).